We begin with the raw amino-acid sequence, 239 residues long: Ribonuclease P protein component 3 (239 aa).

It belongs to the eukaryotic/archaeal RNase P protein component 3 family. As to quaternary structure, consists of a catalytic RNA component and at least 4-5 protein subunits.

It is found in the cytoplasm. It catalyses the reaction Endonucleolytic cleavage of RNA, removing 5'-extranucleotides from tRNA precursor.. Functionally, part of ribonuclease P, a protein complex that generates mature tRNA molecules by cleaving their 5'-ends. The sequence is that of Ribonuclease P protein component 3 from Methanosarcina mazei (strain ATCC BAA-159 / DSM 3647 / Goe1 / Go1 / JCM 11833 / OCM 88) (Methanosarcina frisia).